The primary structure comprises 31 residues: Nemertide alpha-6 (31 aa).

3 cysteine pairs are disulfide-bonded: cysteine 2–cysteine 16, cysteine 9–cysteine 20, and cysteine 15–cysteine 26. 4-hydroxyproline occurs at positions 28 and 29.

This sequence belongs to the nemertide family. Confined to the epidermis and to the mucus layer.

The protein resides in the secreted. Its function is as follows. Highly potent toxin against both insect and some mammalian sodium channels (Nav). It potently inhibits inactivation of insect sodium channels of B.germanica (BgNav1) (EC(50)=2.6 nM) and also delays the inactivation of mammalian Nav with potent activity on Nav1.1/SCN1A (hNav1.1/SCN1A; EC(50)=7.9 nM, rNav1.2/SCN2A; EC(50)=24.3 nM, rNav1.3/SCN3A; EC(50)=105.6 nM, rNav1.4/SCN4A; EC(50)=46.4 nM, hNav1.5/SCN5A; EC(50)=215.2 nM, mNav1.6/SCN8A; EC(50)=36.3 nM, hNav1.9/SCN9A; EC(50)=97.2 nM). 1 uM is enough to completely inhibits the inactivation, resulting in sustained non-inactivating currents. In addition, the toxin significantly enhances the recovery from inactivation, and the open state is not required for the toxin to interact with the channel. In vivo, injection into brine shrimp (Artemia salina) stops movement or causes death after 24 hours (EC(50)=2.8 uM). The polypeptide is Nemertide alpha-6 (Lineus sanguineus (Ribbon worm)).